A 328-amino-acid polypeptide reads, in one-letter code: 17-beta-hydroxysteroid dehydrogenase type 1 (328 aa).

Residues 10 to 38 and Asp-66 each bind NADP(+); that span reads GCSS…ATLR. At Ser-135 the chain carries Phosphoserine; by PKA. Residue Ser-143 coordinates substrate. The active-site Proton acceptor is Tyr-156. Residue Lys-160 participates in NADP(+) binding. A disordered region spans residues 291–328; it reads KAEAGAEAGGGAGPGAEDEAGRGAVGDPELGDPPAAPQ.

It belongs to the short-chain dehydrogenases/reductases (SDR) family. Homodimer. Exists predominantly as a homodimer but also exits as monomer.

It is found in the cytoplasm. The catalysed reaction is 17beta-estradiol + NAD(+) = estrone + NADH + H(+). It catalyses the reaction 17beta-estradiol + NADP(+) = estrone + NADPH + H(+). It carries out the reaction testosterone + NADP(+) = androst-4-ene-3,17-dione + NADPH + H(+). Its pathway is steroid biosynthesis; estrogen biosynthesis. In terms of biological role, favors the reduction of estrogens and androgens. Converts estrone (E1) to a more potent estrogen, 17beta-estradiol (E2). Also has 20-alpha-HSD activity. Uses preferentially NADH. The polypeptide is 17-beta-hydroxysteroid dehydrogenase type 1 (Homo sapiens (Human)).